A 412-amino-acid polypeptide reads, in one-letter code: Gamma-glutamyl phosphate reductase (412 aa).

The protein belongs to the gamma-glutamyl phosphate reductase family.

It is found in the cytoplasm. It catalyses the reaction L-glutamate 5-semialdehyde + phosphate + NADP(+) = L-glutamyl 5-phosphate + NADPH + H(+). The protein operates within amino-acid biosynthesis; L-proline biosynthesis; L-glutamate 5-semialdehyde from L-glutamate: step 2/2. In terms of biological role, catalyzes the NADPH-dependent reduction of L-glutamate 5-phosphate into L-glutamate 5-semialdehyde and phosphate. The product spontaneously undergoes cyclization to form 1-pyrroline-5-carboxylate. This chain is Gamma-glutamyl phosphate reductase, found in Streptococcus suis (strain 98HAH33).